Reading from the N-terminus, the 194-residue chain is Imidazoleglycerol-phosphate dehydratase (194 aa).

This sequence belongs to the imidazoleglycerol-phosphate dehydratase family.

The protein resides in the cytoplasm. It carries out the reaction D-erythro-1-(imidazol-4-yl)glycerol 3-phosphate = 3-(imidazol-4-yl)-2-oxopropyl phosphate + H2O. The protein operates within amino-acid biosynthesis; L-histidine biosynthesis; L-histidine from 5-phospho-alpha-D-ribose 1-diphosphate: step 6/9. This is Imidazoleglycerol-phosphate dehydratase from Limosilactobacillus fermentum (strain NBRC 3956 / LMG 18251) (Lactobacillus fermentum).